The primary structure comprises 863 residues: MDARGGGGRPGDSPGATPAPGPPPPPPPPAPPQPQPPPAPPPNPTTPSHPESADEPGPRSRLCSRDSSCTPGAAKGGANGECGRGEPQCSPEGPARGPKVSFSCRGAASGPAAAEEAGSEEAGPAGEPRGSQASFLQRQFGALLQPGVNKFSLRMFGSQKAVEREQERVKSAGAWIIHPYSDFRFYWDFTMLLFMVGNLIIIPVGITFFKDETTAPWIVFNVVSDTFFLMDLVLNFRTGIVIEDNTEIILDPEKIKKKYLRTWFVVDFVSSIPVDYIFLIVEKGIDSEVYKTARALRIVRFTKILSLLRLLRLSRLIRYIHQWEEIFHMTYDLASAVMRICNLISMMLLLCHWDGCLQFLVPMLQDFPSDCWVSINNMVNHSWSELYSFALFKAMSHMLCIGYGRQAPESMTDIWLTMLSMIVGATCYAMFIGHATALIQSLDSSRRQYQEKYKQVEQYMSFHKLPADFRQKIHDYYEHRYQGKMFDEDSILGELNGPLREEIVNFNCRKLVASMPLFANADPNFVTAMLTKLKFEVFQPGDYIIREGTIGKKMYFIQHGVVSVLTKGNKEMKLSDGSYFGEICLLTRGRRTASVRADTYCRLYSLSVDNFNEVLEEYPMMRRAFETVAIDRLDRIGKKNSILLHKVQHDLSSGVFNNQENAIIQEIVKYDREMVQQAELGQRVGLFPPPPPPQVTSAIATLQQAVAMSFCPQVARPLVGPLALGSPRLVRRAPPGPLPPAASPGPPAASPPAAPSSPRAPRTSPYGVPGSPATRVGPALPARRLSRASRPLSASQPSLPHGAPAPSPAASARPASSSTPRLGPAPTTRTAAPSPDRRDSASPGAASGLDPLDSARSRLSSNL.

The segment covering 1–10 (MDARGGGGRP) has biased composition (gly residues). The interval 1 to 131 (MDARGGGGRP…AGPAGEPRGS (131 aa)) is disordered. Residues 1-188 (MDARGGGGRP…PYSDFRFYWD (188 aa)) are Cytoplasmic-facing. Residues 17–47 (TPAPGPPPPPPPPAPPQPQPPPAPPPNPTTP) show a composition bias toward pro residues. Over residues 106-128 (GAASGPAAAEEAGSEEAGPAGEP) the composition is skewed to low complexity. 2 positions are modified to phosphoserine: S119 and S134. Residues 131-182 (SQASFLQRQFGALLQPGVNKFSLRMFGSQKAVEREQERVKSAGAWIIHPYSD) are involved in subunit assembly. The helical transmembrane segment at 189–209 (FTMLLFMVGNLIIIPVGITFF) threads the bilayer. Topologically, residues 210–213 (KDET) are extracellular. The helical transmembrane segment at 214-234 (TAPWIVFNVVSDTFFLMDLVL) threads the bilayer. The Cytoplasmic segment spans residues 235 to 261 (NFRTGIVIEDNTEIILDPEKIKKKYLR). A helical transmembrane segment spans residues 262–282 (TWFVVDFVSSIPVDYIFLIVE). Topologically, residues 283 to 290 (KGIDSEVY) are extracellular. Residues 291-311 (KTARALRIVRFTKILSLLRLL) traverse the membrane as a helical; Voltage-sensor segment. Residues 312–342 (RLSRLIRYIHQWEEIFHMTYDLASAVMRICN) are Cytoplasmic-facing. A helical membrane pass occupies residues 343–363 (LISMMLLLCHWDGCLQFLVPM). The Extracellular portion of the chain corresponds to 364 to 386 (LQDFPSDCWVSINNMVNHSWSEL). The N-linked (GlcNAc...) asparagine glycan is linked to N380. The segment at residues 387–408 (YSFALFKAMSHMLCIGYGRQAP) is an intramembrane region (pore-forming). Residues 409–413 (ESMTD) lie on the Extracellular side of the membrane. The helical transmembrane segment at 414 to 434 (IWLTMLSMIVGATCYAMFIGH) threads the bilayer. Residues 435-863 (ATALIQSLDS…SARSRLSSNL (429 aa)) lie on the Cytoplasmic side of the membrane. Positions 581, 582, 584, 591, 592, and 632 each coordinate 3',5'-cyclic AMP. S641 carries the phosphoserine; by PKG/PRKG2 modification. S726 carries the post-translational modification Phosphoserine. R728 carries the omega-N-methylarginine modification. Positions 730–863 (VRRAPPGPLP…SARSRLSSNL (134 aa)) are disordered. Pro residues predominate over residues 734 to 755 (PPGPLPPAASPGPPAASPPAAP). Phosphoserine is present on residues S743, S750, and S757. Composition is skewed to low complexity over residues 756 to 765 (SSPRAPRTSP) and 778 to 834 (PALP…AAPS). S840, S842, and S847 each carry phosphoserine.

The protein belongs to the potassium channel HCN family. As to quaternary structure, homotetramer. The channel is composed of a homo- or heterotetrameric complex of pore-forming subunits. Heterotetramer with HCN1. Forms an obligate 4:4 complex with accessory subunit PEX5L. Interacts with KCNE2. Phosphorylation at Ser-641 by PRKG2 shifts the voltage-dependence to more negative voltages, hence counteracting the stimulatory effect of cGMP on gating. In terms of processing, N-glycosylated; required for cell surface trafficking of HCN2. Post-translationally, S-palmitoylated. Highly expressed in neonatal and adult ventricle and in brain. Highly expressed in the pyramidal layer in hippocampus, in anterior dorsal nucleus in thalamus, in the mammillary nucleus in hypothalamus, in red nucleus, in trigeminal mesencephalic, spinal and principal nuclei, in cochlear and trapezoid nuclei and in the dorsal tegemental nucleus.

Its subcellular location is the cell membrane. The catalysed reaction is Na(+)(in) = Na(+)(out). It catalyses the reaction K(+)(in) = K(+)(out). The enzyme catalyses NH4(+)(in) = NH4(+)(out). Activated by cAMP, and at 10-100 times higher concentrations, also by cGMP. cAMP binding causes a conformation change that leads to the assembly of an active tetramer and channel opening. In the absence of cAMP, the C-terminal region is thought to exert a tonic inhibition on the pore when HCN2 is in a non-tetrameric form. Channel activity is modulated by intracellular chloride ions and pH; acidic pH shifts the activation to more negative voltages. Phosphatidylinositol-4,5- bisphosphate (PIP(2)) acts as a ligand that allosterically opens HCN2 by shifting voltage-dependent channel activation toward depolarized potentials. Inhibited by extracellular cesium ions. In terms of biological role, hyperpolarization-activated ion channel exhibiting weak selectivity for potassium over sodium ions. Contributes to the native pacemaker currents in heart (If) and in neurons (Ih). Can also transport ammonium in the distal nephron. Involved in the initiation of neuropathic pain in sensory neurons. Produces a large instantaneous current. The chain is Potassium/sodium hyperpolarization-activated cyclic nucleotide-gated channel 2 (Hcn2) from Rattus norvegicus (Rat).